A 213-amino-acid chain; its full sequence is MSNVWHNRTLALAGIIQALNSVQQIARQGNAPIDTVAASLASVFKMNPKSAEDVYGNIEGVSVGLQVLNQQLNRKSYRTDPELLRYLTNIMYLEQRLKKRPRILAQIADQIKHIEPQTEELSPADPLIIARLADTYVNTISTLTPRIQIRGEETHLRQPENIERVRALLLAAIRSAVLWRQMGGTRLHLLFQGRQLLYETHTLLKRIPRAGAA.

The protein belongs to the HflD family.

It localises to the cytoplasm. Its subcellular location is the cell inner membrane. The chain is High frequency lysogenization protein HflD homolog from Nitrosococcus oceani (strain ATCC 19707 / BCRC 17464 / JCM 30415 / NCIMB 11848 / C-107).